The sequence spans 330 residues: Olfactory receptor 1P1 (330 aa).

Residues 1 to 39 (MGLTQDFFPPTSELLEGGNQTSTFEFLLWGLSDQPQQQH) are Extracellular-facing. N19 carries N-linked (GlcNAc...) asparagine glycosylation. Residues 40–60 (IFFLLFLWMYVVTVAGNLLIV) traverse the membrane as a helical segment. The Cytoplasmic portion of the chain corresponds to 61-71 (LAIGTDTHLHT). The chain crosses the membrane as a helical span at residues 72 to 92 (PMYFFLASLSCADIFSTSTTV). The Extracellular portion of the chain corresponds to 93–111 (PKALVNIQTQSRSISYAGC). C111 and C192 form a disulfide bridge. The helical transmembrane segment at 112-132 (LAQLYFFLTFGDMDIFLPATM) threads the bilayer. The Cytoplasmic portion of the chain corresponds to 133–137 (AYDRY). Residues 138 to 158 (VAICHLLHYMMIMSLHRCAFL) form a helical membrane-spanning segment. Over 159–209 (VTACWTLTSLLAMTRTFLIFRLSLCSKILPGFFCDLGPLMKVSCSDAQVNE) the chain is Extracellular. A helical transmembrane segment spans residues 210–230 (LVLLFLGGAVILIPFMLILVS). Residues 231–257 (YIRIVSAILRAPSAQGRRKAFSTCDSH) lie on the Cytoplasmic side of the membrane. A helical transmembrane segment spans residues 258–278 (LVVVALFFGTVIRAYLCPSSS). The Extracellular portion of the chain corresponds to 279 to 286 (SSNSVKED). The chain crosses the membrane as a helical span at residues 287–307 (TAAAVMYTVVTPLLNPFIYSM). The Cytoplasmic segment spans residues 308-330 (RNKDMKAAVVRLLKGRVSFSQGQ).

Belongs to the G-protein coupled receptor 1 family.

Its subcellular location is the cell membrane. In terms of biological role, odorant receptor. The protein is Olfactory receptor 1P1 (OR1P1) of Homo sapiens (Human).